Reading from the N-terminus, the 426-residue chain is Serine hydroxymethyltransferase (426 aa).

(6S)-5,6,7,8-tetrahydrofolate contacts are provided by residues L113 and 117 to 119 (GHL). An N6-(pyridoxal phosphate)lysine modification is found at K222. Residue 363-365 (SPF) coordinates (6S)-5,6,7,8-tetrahydrofolate.

It belongs to the SHMT family. Homodimer. Pyridoxal 5'-phosphate is required as a cofactor.

It localises to the cytoplasm. The enzyme catalyses (6R)-5,10-methylene-5,6,7,8-tetrahydrofolate + glycine + H2O = (6S)-5,6,7,8-tetrahydrofolate + L-serine. It participates in one-carbon metabolism; tetrahydrofolate interconversion. It functions in the pathway amino-acid biosynthesis; glycine biosynthesis; glycine from L-serine: step 1/1. Catalyzes the reversible interconversion of serine and glycine with tetrahydrofolate (THF) serving as the one-carbon carrier. This reaction serves as the major source of one-carbon groups required for the biosynthesis of purines, thymidylate, methionine, and other important biomolecules. Also exhibits THF-independent aldolase activity toward beta-hydroxyamino acids, producing glycine and aldehydes, via a retro-aldol mechanism. This is Serine hydroxymethyltransferase from Azobacteroides pseudotrichonymphae genomovar. CFP2.